Consider the following 162-residue polypeptide: Transcriptional repressor NrdR (162 aa).

Residues 1-21 are disordered; that stretch reads MNCPDCGNGRTRVIDTGASSD. Residues 3 to 34 fold into a zinc finger; sequence CPDCGNGRTRVIDTGASSDGASVRRRRECQRC. One can recognise an ATP-cone domain in the interval 49 to 139; that stretch reads LQVKKRDGTI…VYKAFSEPQE (91 aa).

The protein belongs to the NrdR family. Requires Zn(2+) as cofactor.

In terms of biological role, negatively regulates transcription of bacterial ribonucleotide reductase nrd genes and operons by binding to NrdR-boxes. The chain is Transcriptional repressor NrdR from Natronomonas pharaonis (strain ATCC 35678 / DSM 2160 / CIP 103997 / JCM 8858 / NBRC 14720 / NCIMB 2260 / Gabara) (Halobacterium pharaonis).